Here is a 70-residue protein sequence, read N- to C-terminus: Cold shock-like protein CspH (70 aa).

In terms of domain architecture, CSD spans 7–67; that stretch reads GIVKTFDRKS…GLRGPTAANV (61 aa).

The protein localises to the cytoplasm. The chain is Cold shock-like protein CspH (cspH) from Escherichia coli O6:H1 (strain CFT073 / ATCC 700928 / UPEC).